The sequence spans 449 residues: Exodeoxyribonuclease 7 large subunit (449 aa).

Belongs to the XseA family. As to quaternary structure, heterooligomer composed of large and small subunits.

The protein resides in the cytoplasm. The enzyme catalyses Exonucleolytic cleavage in either 5'- to 3'- or 3'- to 5'-direction to yield nucleoside 5'-phosphates.. Bidirectionally degrades single-stranded DNA into large acid-insoluble oligonucleotides, which are then degraded further into small acid-soluble oligonucleotides. The sequence is that of Exodeoxyribonuclease 7 large subunit from Salmonella paratyphi B (strain ATCC BAA-1250 / SPB7).